Consider the following 557-residue polypeptide: MSARISFLKNPDPCNHLSDYKLRYGTDGYKSFNNLFRCFNDARIKIKLQGIDIPRCSYCSVYQKRLYICLICRSISCSSHILLHTQLNKGHDIAIDVERSELYCCACIDQVYDSEFDEVVVSKQLFGLGMSVKSGADVVAVRSNKKRRLDSQLIIGSNFLVSPRDRREKWTFPLGLRGLNNLGSTCFMNAVLQALVHAPPLRNFWLSGQHNRDLCPRRTMGLLCLPCDLDVIFSAMFSGDRTPYSPAHLLYSWWQHSTNLATYEQQDSHEFFISLLDRIHENEGKSKCLYQDNEECQCITHKAFSGLLRSDVTCTTCGSTSTTYDPFIDISLTLDSMNGFSPADCRKNRYSGGPSVNAIMPTLSGCLDFFTRSEKLGPDQKLNCQSCGEKRESSKQMSIRRLPLLLCLHVKRFEHSLTRKTSRKIDSYLQYPFRLNMSPYLSSSIIGKRFGNRIFAFDGEGEYDSSSSSSPSAEFEIFAVVTHKGMLESGHYVTYLRLKGLWYRCDDAWINEVEEEVVRGCECYMLFYAQETVIQKAHKELSYQVISMADAFPFADC.

The segment at 36 to 130 (FRCFNDARIK…VSKQLFGLGM (95 aa)) adopts a UBP-type; degenerate zinc-finger fold. Zn(2+) is bound by residues Cys-56, Cys-59, Cys-69, Cys-72, Cys-77, His-80, His-84, and His-91. A USP domain is found at 177–531 (RGLNNLGSTC…ECYMLFYAQE (355 aa)). The active-site Nucleophile is the Cys-186. His-491 serves as the catalytic Proton acceptor.

Belongs to the peptidase C19 family. As to quaternary structure, component of a deubiquitination module (DUB module) formed by ENY2, SGF11, and UBP22 in Arabidopsis. Interacts directly with SGF11, but not with ENY2.

The protein resides in the nucleus. The protein localises to the nucleoplasm. It catalyses the reaction Thiol-dependent hydrolysis of ester, thioester, amide, peptide and isopeptide bonds formed by the C-terminal Gly of ubiquitin (a 76-residue protein attached to proteins as an intracellular targeting signal).. Component of a deubiquitination module (DUB module) that specifically deubiquinates monoubiquinated histone H2B (H2Bub). Does not seem to be a component of the TREX-2 complex. Seems to act independently of the SAGA multiprotein complex. The DUB module is responsible for the major H2Bub deubiquitinase activity in Arabidopsis. The protein is Ubiquitin C-terminal hydrolase 22 of Arabidopsis thaliana (Mouse-ear cress).